Consider the following 220-residue polypeptide: MSRPLLQLALDHSSLEAAQRDVTLLKDSVDIVEAGTILCLNEGLGAVKALREQCPDKIIVADWKVADAGETLAQQAFGAGANWMTIICAAPLATVEKGHAMAQRCGGEIQIELFGNWTLDDARDWHRIGVRQAIYHRGRDAQASGQQWGEADLARMKALSDIGLELSITGGITPADLPLFKDIRVKAFIAGRALAGAANPAQVAGDFHAQIDAIWGGARA.

Asp-11 serves as a coordination point for substrate. Positions 33 and 62 each coordinate Mg(2+). Arg-192 is a binding site for substrate.

The protein belongs to the HPS/KGPDC family. KGPDC subfamily. In terms of assembly, homodimer. Requires Mg(2+) as cofactor.

The catalysed reaction is 3-dehydro-L-gulonate 6-phosphate + H(+) = L-xylulose 5-phosphate + CO2. Catalyzes the decarboxylation of 3-keto-L-gulonate-6-P into L-xylulose-5-P. May be involved in the utilization of 2,3-diketo-L-gulonate. The sequence is that of 3-keto-L-gulonate-6-phosphate decarboxylase SgbH (sgbH) from Escherichia coli (strain K12).